We begin with the raw amino-acid sequence, 529 residues long: MSNSPFQQEVAKRRTFAIISHPDAGKTTITEKVLLFGQAIQKAGTVKGRGSNQHAKSDWMEMEKQRGISITTSVMQFPYQDCLVNLLDTPGHEDFSEDTYRTLTAVDCCLMVIDAAKGVEERTRKLMEVTRLRDTPILTFMNKLDRDIRDPMELMDEVENELNIACCPITWPIGCGKSFKGVYHLYLDETYLYQTGKGHTIQEVRAIKGLNNPELDAAIGEDLAEQLRQELELVQGASHEFDHQAFLQGELTPVFFGTALGNFGVNHMLDGLVKWAPAPMPRQTDVREVSAQEDKFTGFIFKIQANMDPKHRDRVAFLRVVSGQYEKGMKLHQVRIKKDVVIADALTFMAGDRSHVDHAYPGDIIGLHNHGTIQIGDTFTQGEDLKFTGIPNFAPELFRRIRLRDPLKQKQLLKGLVQLSEEGAVQVFRPLANNDLIVGAVGILQFDVVVARLKSEYNVEALYEPVNVSTARWVECHDAKKLEEFKRKSEQNLALDGGDNLTYIAPTMVNLNLTRERYPDINFRKTREH.

The region spanning 11–280 (AKRRTFAIIS…GLVKWAPAPM (270 aa)) is the tr-type G domain. GTP contacts are provided by residues 20 to 27 (SHPDAGKT), 88 to 92 (DTPGH), and 142 to 145 (NKLD).

Belongs to the TRAFAC class translation factor GTPase superfamily. Classic translation factor GTPase family. PrfC subfamily.

The protein resides in the cytoplasm. Its function is as follows. Increases the formation of ribosomal termination complexes and stimulates activities of RF-1 and RF-2. It binds guanine nucleotides and has strong preference for UGA stop codons. It may interact directly with the ribosome. The stimulation of RF-1 and RF-2 is significantly reduced by GTP and GDP, but not by GMP. In Photorhabdus laumondii subsp. laumondii (strain DSM 15139 / CIP 105565 / TT01) (Photorhabdus luminescens subsp. laumondii), this protein is Peptide chain release factor 3.